Reading from the N-terminus, the 767-residue chain is Protein transport protein Sec23B (767 aa).

A2 carries the post-translational modification N-acetylalanine. 4 residues coordinate Zn(2+): C61, C66, C85, and C88. K564 carries the N6-acetyllysine modification. A Gelsolin-like repeat occupies 634–720 (PEPVLLDSSS…EHGGSQARFL (87 aa)).

This sequence belongs to the SEC23/SEC24 family. SEC23 subfamily. In terms of assembly, COPII is composed of at least five proteins: the Sec23/24 complex, the Sec13/31 complex and Sar1. Interacts with SAR1A. Ubiquitously expressed.

The protein resides in the cytoplasmic vesicle. It is found in the COPII-coated vesicle membrane. It localises to the endoplasmic reticulum membrane. The protein localises to the cytoplasm. Its subcellular location is the cytosol. Its function is as follows. Component of the coat protein complex II (COPII) which promotes the formation of transport vesicles from the endoplasmic reticulum (ER). The coat has two main functions, the physical deformation of the endoplasmic reticulum membrane into vesicles and the selection of cargo molecules for their transport to the Golgi complex. This Homo sapiens (Human) protein is Protein transport protein Sec23B.